Here is a 632-residue protein sequence, read N- to C-terminus: Cyclic GMP-AMP synthase-like receptor 2 (632 aa).

The Mg(2+) site is built by aspartate 71, aspartate 73, and aspartate 181. Residue aspartate 295 coordinates Mn(2+).

It belongs to the mab-21 family. It depends on Mg(2+) as a cofactor. Mn(2+) is required as a cofactor.

Functionally, nucleotidyltransferase that catalyzes the formation of some cyclic nucleotide and plays a key role in innate immunity. Directly binds some unknown ligand, activating the nucleotidyltransferase activity, leading to synthesis of a second messenger that binds to and activates Sting, thereby triggering the immune response via activation of the NF-kappa-B transcription factor. The polypeptide is Cyclic GMP-AMP synthase-like receptor 2 (Crassostrea virginica (Eastern oyster)).